The following is a 241-amino-acid chain: Histone H1-II (241 aa).

Residues 1-10 (MASDAPEVKA) are compositionally biased toward basic and acidic residues. Disordered stretches follow at residues 1 to 27 (MASD…THPP) and 89 to 241 (NSYK…AKKA). The segment covering 11–20 (PKAKTQKKPK) has biased composition (basic residues). The H15 domain occupies 24-95 (THPPYIQMVT…KVKNSYKLSD (72 aa)). Residues 99 to 111 (SKAKAAAKPKAAP) show a composition bias toward basic residues. 3 tandem repeats follow at residues 111-116 (PKKAAA), 117-122 (PKKAAA), and 123-128 (PKKAKA). An 8 X 6 AA repeats of P-K-K-A-[AK]-A region spans residues 111 to 217 (PKKAAAPKKA…KAATPKKAKA (107 aa)). The span at 129–155 (PKKEGEKKAVKPKSEKKAAKPKTEKKP) shows a compositional bias: basic and acidic residues. Basic residues-rich tracts occupy residues 156–184 (KAAK…KATP) and 194–241 (AAPK…AKKA). Residues 183–186 (TPKK) mediate DNA binding. Repeat copies occupy residues 184-189 (PKKAAA), 190-195 (PKKAAA), 196-201 (PKKAKA), 204-209 (PKKAKA), and 212-217 (PKKAKA). 2 DNA-binding regions span residues 203–206 (TPKK) and 211–214 (TPKK).

The protein belongs to the histone H1/H5 family.

It is found in the nucleus. The protein localises to the chromosome. In terms of biological role, histones H1 are necessary for the condensation of nucleosome chains into higher-order structures. The protein is Histone H1-II (H1-II) of Volvox carteri (Green alga).